We begin with the raw amino-acid sequence, 130 residues long: Large ribosomal subunit protein bL19 (130 aa).

Belongs to the bacterial ribosomal protein bL19 family.

Functionally, this protein is located at the 30S-50S ribosomal subunit interface and may play a role in the structure and function of the aminoacyl-tRNA binding site. The polypeptide is Large ribosomal subunit protein bL19 (Mycoplasma capricolum subsp. capricolum (strain California kid / ATCC 27343 / NCTC 10154)).